The following is a 368-amino-acid chain: 2-aminoethylphosphonate--pyruvate transaminase (368 aa).

An N6-(pyridoxal phosphate)lysine modification is found at Lys192.

Belongs to the class-V pyridoxal-phosphate-dependent aminotransferase family. PhnW subfamily. As to quaternary structure, homodimer. The cofactor is pyridoxal 5'-phosphate.

The catalysed reaction is (2-aminoethyl)phosphonate + pyruvate = phosphonoacetaldehyde + L-alanine. In terms of biological role, involved in phosphonate degradation. This chain is 2-aminoethylphosphonate--pyruvate transaminase, found in Pseudomonas putida (strain ATCC 700007 / DSM 6899 / JCM 31910 / BCRC 17059 / LMG 24140 / F1).